The chain runs to 246 residues: tRNA (guanine-N(1)-)-methyltransferase (246 aa).

Residues G113 and 133–138 contribute to the S-adenosyl-L-methionine site; that span reads IGDYVL.

The protein belongs to the RNA methyltransferase TrmD family. As to quaternary structure, homodimer.

It localises to the cytoplasm. It catalyses the reaction guanosine(37) in tRNA + S-adenosyl-L-methionine = N(1)-methylguanosine(37) in tRNA + S-adenosyl-L-homocysteine + H(+). In terms of biological role, specifically methylates guanosine-37 in various tRNAs. The chain is tRNA (guanine-N(1)-)-methyltransferase from Haemophilus influenzae (strain PittGG).